Reading from the N-terminus, the 322-residue chain is Protein-L-isoaspartate O-methyltransferase (322 aa).

The segment at 1-101 is disordered; the sequence is MSGERAKRFP…AKQGDRSAAP (101 aa). The span at 14–29 shows a compositional bias: basic and acidic residues; that stretch reads EDLKREPRKPEGRVAE. Low complexity-rich tracts occupy residues 33–51 and 76–91; these read AGDA…PAAA and HAPA…PQGG. Residue Ser-170 is part of the active site.

It belongs to the methyltransferase superfamily. L-isoaspartyl/D-aspartyl protein methyltransferase family.

The protein localises to the cytoplasm. The enzyme catalyses [protein]-L-isoaspartate + S-adenosyl-L-methionine = [protein]-L-isoaspartate alpha-methyl ester + S-adenosyl-L-homocysteine. Functionally, catalyzes the methyl esterification of L-isoaspartyl residues in peptides and proteins that result from spontaneous decomposition of normal L-aspartyl and L-asparaginyl residues. It plays a role in the repair and/or degradation of damaged proteins. In Burkholderia pseudomallei (strain 1710b), this protein is Protein-L-isoaspartate O-methyltransferase.